The primary structure comprises 467 residues: Methylenetetrahydrofolate--tRNA-(uracil-5-)-methyltransferase TrmFO (467 aa).

11-16 is an FAD binding site; sequence GAGLAG.

The protein belongs to the MnmG family. TrmFO subfamily. FAD is required as a cofactor.

The protein resides in the cytoplasm. It carries out the reaction uridine(54) in tRNA + (6R)-5,10-methylene-5,6,7,8-tetrahydrofolate + NADH + H(+) = 5-methyluridine(54) in tRNA + (6S)-5,6,7,8-tetrahydrofolate + NAD(+). The enzyme catalyses uridine(54) in tRNA + (6R)-5,10-methylene-5,6,7,8-tetrahydrofolate + NADPH + H(+) = 5-methyluridine(54) in tRNA + (6S)-5,6,7,8-tetrahydrofolate + NADP(+). Functionally, catalyzes the folate-dependent formation of 5-methyl-uridine at position 54 (M-5-U54) in all tRNAs. This is Methylenetetrahydrofolate--tRNA-(uracil-5-)-methyltransferase TrmFO from Prochlorococcus marinus (strain MIT 9303).